The primary structure comprises 110 residues: Nucleoid-associated protein NFA_2940 (110 aa).

This sequence belongs to the YbaB/EbfC family. In terms of assembly, homodimer.

It localises to the cytoplasm. The protein localises to the nucleoid. Its function is as follows. Binds to DNA and alters its conformation. May be involved in regulation of gene expression, nucleoid organization and DNA protection. In Nocardia farcinica (strain IFM 10152), this protein is Nucleoid-associated protein NFA_2940.